A 594-amino-acid chain; its full sequence is RING finger protein 207 (594 aa).

The RING-type zinc finger occupies 25–64 (CPLCHAQYERPCLLDCFHDFCAGCLRGRTADGRVACPLCQ). The B box-type; atypical zinc finger occupies 93 to 145 (VEAVHCANCDLDCSKQDAETACFCNTCGQPLCARCRDETHRARMFARHDIVAL). Zn(2+)-binding residues include C98, C101, C127, and H132. Residues 369–400 (NTLAGGSGPKVLMGPSCPSPVRKVSRSPVQKP) form a disordered region. A coiled-coil region spans residues 424–458 (CRHYEDSYRGLQAEVQNLKDQVQELHRDLTKHHSL). Residues 552 to 594 (FQASADDESENPQTAYDASRNGETPASLLLPGSVASAEPPFVN) form a disordered region. The segment covering 562-575 (NPQTAYDASRNGET) has biased composition (polar residues).

As to quaternary structure, interacts with the core-glycosylated, but not the fully glycosylated form of KCNH2/HERG. Interacts with DNAJA1 and HSPA8. Interacts (via the C-terminus) with HSPA1A; this interaction additively increases KCNH2 expression.

The protein resides in the cytoplasm. Its function is as follows. Plays a role in cardiac repolarization possibly by stabilizing membrane expression of the potassium channel KCNH2/HERG, or by assisting its synthesis, folding or export from the endoplasmic reticulum, in a heat shock protein-dependent manner. The sequence is that of RING finger protein 207 (RNF207) from Oryctolagus cuniculus (Rabbit).